A 210-amino-acid polypeptide reads, in one-letter code: Shikimate kinase (210 aa).

34–39 (GAGKSV) is a binding site for ATP. Position 38 (Ser38) interacts with Mg(2+). Substrate contacts are provided by Asp56, Arg80, and Gly102. Arg140 serves as a coordination point for ATP. Arg159 contributes to the substrate binding site.

This sequence belongs to the shikimate kinase family. In terms of assembly, monomer. The cofactor is Mg(2+).

It localises to the cytoplasm. The catalysed reaction is shikimate + ATP = 3-phosphoshikimate + ADP + H(+). Its pathway is metabolic intermediate biosynthesis; chorismate biosynthesis; chorismate from D-erythrose 4-phosphate and phosphoenolpyruvate: step 5/7. Catalyzes the specific phosphorylation of the 3-hydroxyl group of shikimic acid using ATP as a cosubstrate. This is Shikimate kinase from Bartonella quintana (strain Toulouse) (Rochalimaea quintana).